We begin with the raw amino-acid sequence, 408 residues long: CinA-like protein (408 aa).

It belongs to the CinA family.

This chain is CinA-like protein, found in Thermotoga neapolitana (strain ATCC 49049 / DSM 4359 / NBRC 107923 / NS-E).